Reading from the N-terminus, the 178-residue chain is MKKFSRKTEETEVEVVLGEELKVDTGIAFLDHMLKTLSRHSGIKLRVKAKGDLEHHVIEDVAIALGKALAGVDKKGLERFGDAIVPMDDAVAICGLDFSGRGVLVVEGTFGDGEMREEDFLHFLDTLCRNAGLNVYLSVKGSNSHHKMEAAVKAVAISLKKALTKNGNDYRSAKGVLD.

Belongs to the imidazoleglycerol-phosphate dehydratase family.

The protein resides in the cytoplasm. It carries out the reaction D-erythro-1-(imidazol-4-yl)glycerol 3-phosphate = 3-(imidazol-4-yl)-2-oxopropyl phosphate + H2O. The protein operates within amino-acid biosynthesis; L-histidine biosynthesis; L-histidine from 5-phospho-alpha-D-ribose 1-diphosphate: step 6/9. The chain is Imidazoleglycerol-phosphate dehydratase from Archaeoglobus fulgidus (strain ATCC 49558 / DSM 4304 / JCM 9628 / NBRC 100126 / VC-16).